Consider the following 119-residue polypeptide: MAPFVAIALLVLLSLSGLEAIQHAPKIQVYSRHPAENGKPNFLNCYVSGFHPSDIEVDLLKNGKKIEKVEHSDLSFSKDWSFYLLYYTEFTPNEKDEYACRVSHVTFSTPKTVKWDRNM.

The signal sequence occupies residues 1–20; that stretch reads MAPFVAIALLVLLSLSGLEA. In terms of domain architecture, Ig-like C1-type spans 25–114; the sequence is PKIQVYSRHP…VTFSTPKTVK (90 aa). A disulfide bridge links Cys-45 with Cys-100.

Belongs to the beta-2-microglobulin family. As to quaternary structure, heterodimer of an alpha chain and a beta chain. Beta-2-microglobulin is the beta-chain of major histocompatibility complex class I molecules.

The protein resides in the secreted. Its function is as follows. Component of the class I major histocompatibility complex (MHC). Involved in the presentation of peptide antigens to the immune system. The polypeptide is Beta-2-microglobulin (B2M) (Cheracebus torquatus (Collared titi monkey)).